Reading from the N-terminus, the 117-residue chain is SPbeta prophage-derived uncharacterized protein YosL (117 aa).

The protein is SPbeta prophage-derived uncharacterized protein YosL (yosL) of Bacillus subtilis (strain 168).